The chain runs to 360 residues: MSNTYGTIFRITTFGESHGNAVGVIVDGCPPNIEIDEAFIQSEMARRKPGQSKIVTQRQEDDEIEILSGVFEGKSTGTPIAMMVRNADQRSKDYSHIADRFRPSHADYTYQEKYGFRDYRGGGRSSARETLARVAAGALAKMILAKVNIKIQAYVSQVGPLKLTTDYKALNIPNAETNIIRCPDDAVAAKMIEFIDETRKNKDTIGGVVSCVIEGVPVGLGEPVFDKLHAELGKAMLSINAVKGFEYGSGFEGVEQFGSQHNDKFYADEQGNVRTQTNNSGGIQGGISNGEDIYFRVAFKPVATIMIDQESINDKGETVTVSGKGRHDPCVVPRAVPIVEAMAAIVMVDFYLRNKAIRLD.

Arg-47 lines the NADP(+) pocket. Residues 124 to 126, 240 to 241, Gly-285, 300 to 304, and Arg-326 contribute to the FMN site; these read RSS, NA, and KPVAT.

This sequence belongs to the chorismate synthase family. In terms of assembly, homotetramer. Requires FMNH2 as cofactor.

The enzyme catalyses 5-O-(1-carboxyvinyl)-3-phosphoshikimate = chorismate + phosphate. It participates in metabolic intermediate biosynthesis; chorismate biosynthesis; chorismate from D-erythrose 4-phosphate and phosphoenolpyruvate: step 7/7. Catalyzes the anti-1,4-elimination of the C-3 phosphate and the C-6 proR hydrogen from 5-enolpyruvylshikimate-3-phosphate (EPSP) to yield chorismate, which is the branch point compound that serves as the starting substrate for the three terminal pathways of aromatic amino acid biosynthesis. This reaction introduces a second double bond into the aromatic ring system. The polypeptide is Chorismate synthase (Cytophaga hutchinsonii (strain ATCC 33406 / DSM 1761 / CIP 103989 / NBRC 15051 / NCIMB 9469 / D465)).